The primary structure comprises 943 residues: UvrABC system protein A (943 aa).

31–38 (GLSGSGKS) serves as a coordination point for ATP. A C4-type zinc finger spans residues 253–280 (CPHCGYSVPELEPRLFSFNNPAGACPTC). ABC transporter domains lie at 310 to 587 (WDRR…PNSI) and 607 to 937 (LDKK…RFLK). 640–647 (GVSGSGKS) provides a ligand contact to ATP. The C4-type zinc-finger motif lies at 740-766 (CEACQGDGVLKVEMHFLPDVYVPCDQC).

This sequence belongs to the ABC transporter superfamily. UvrA family. In terms of assembly, forms a heterotetramer with UvrB during the search for lesions.

It is found in the cytoplasm. Its function is as follows. The UvrABC repair system catalyzes the recognition and processing of DNA lesions. UvrA is an ATPase and a DNA-binding protein. A damage recognition complex composed of 2 UvrA and 2 UvrB subunits scans DNA for abnormalities. When the presence of a lesion has been verified by UvrB, the UvrA molecules dissociate. The protein is UvrABC system protein A of Haemophilus influenzae (strain ATCC 51907 / DSM 11121 / KW20 / Rd).